A 391-amino-acid chain; its full sequence is Transposase for insertion sequence element IS905 (391 aa).

This sequence belongs to the transposase mutator family.

Its function is as follows. Required for the transposition of the insertion element. The polypeptide is Transposase for insertion sequence element IS905 (tra905) (Lactococcus lactis subsp. lactis (strain IL1403) (Streptococcus lactis)).